A 736-amino-acid polypeptide reads, in one-letter code: Probable potassium transport system protein Kup 2 (736 aa).

12 helical membrane-spanning segments follow: residues 1 to 21, 42 to 62, 84 to 104, 126 to 146, 156 to 176, 204 to 224, 239 to 259, 287 to 307, 334 to 354, 364 to 384, 390 to 410, and 414 to 434; these read MAIV…LYTA, MLSL…VLIA, GAWL…DSVL, LFDE…VILF, IGKV…IVGV, AAGI…EALY, WPFI…WMLA, AVIL…TGAF, LYIP…LAIF, YGLA…VYLW, VGAI…FIAS, and FLHG…VMYT. Disordered regions lie at residues 649 to 678 and 693 to 736; these read TDTA…DTTS and AEAR…KQKR. 2 stretches are compositionally biased toward low complexity: residues 660-677 and 700-709; these read PTRA…MDTT and EAAAADAPAE. Over residues 710–721 the composition is skewed to basic and acidic residues; that stretch reads QGDKGDKGKAEN.

This sequence belongs to the HAK/KUP transporter (TC 2.A.72) family.

It localises to the cell membrane. The enzyme catalyses K(+)(in) + H(+)(in) = K(+)(out) + H(+)(out). Functionally, transport of potassium into the cell. Likely operates as a K(+):H(+) symporter. The sequence is that of Probable potassium transport system protein Kup 2 from Bifidobacterium longum (strain NCC 2705).